A 164-amino-acid polypeptide reads, in one-letter code: FMN reductase (NADH) RutF (164 aa).

It belongs to the non-flavoprotein flavin reductase family. RutF subfamily.

The enzyme catalyses FMNH2 + NAD(+) = FMN + NADH + 2 H(+). In terms of biological role, catalyzes the reduction of FMN to FMNH2 which is used to reduce pyrimidine by RutA via the Rut pathway. This chain is FMN reductase (NADH) RutF, found in Shigella flexneri serotype X (strain 2002017).